The chain runs to 83 residues: Short neurotoxin II (83 aa).

A signal peptide spans 1–21; it reads MKTLLLTLVVVTVVCLDLGYT. 4 cysteine pairs are disulfide-bonded: Cys24–Cys45, Cys38–Cys62, Cys64–Cys75, and Cys76–Cys81.

This sequence belongs to the three-finger toxin family. Short-chain subfamily. Type I alpha-neurotoxin sub-subfamily. As to expression, expressed by the venom gland.

It localises to the secreted. Its function is as follows. Binds to muscle nicotinic acetylcholine receptor (nAChR) and inhibit acetylcholine from binding to the receptor, thereby impairing neuromuscular transmission. The chain is Short neurotoxin II from Laticauda colubrina (Yellow-lipped sea krait).